The following is a 503-amino-acid chain: Cytochrome P450 3A9 (503 aa).

Residue cysteine 442 participates in heme binding.

It belongs to the cytochrome P450 family. It depends on heme as a cofactor. As to expression, mainly expressed in olfactory epithelium.

It is found in the endoplasmic reticulum membrane. The protein localises to the microsome membrane. The catalysed reaction is an organic molecule + reduced [NADPH--hemoprotein reductase] + O2 = an alcohol + oxidized [NADPH--hemoprotein reductase] + H2O + H(+). In terms of biological role, this isozyme seems to be implicated in olfaction. Active in the demethylation of erythromycin as well as benzphetamine. This Rattus norvegicus (Rat) protein is Cytochrome P450 3A9 (Cyp3a9).